A 384-amino-acid chain; its full sequence is Eukaryotic translation initiation factor 3 subunit M (384 aa).

One can recognise a PCI domain in the interval 184–346 (ENRKAIEAMI…KKILITGAFP (163 aa)).

It belongs to the eIF-3 subunit M family. Component of the eukaryotic translation initiation factor 3 (eIF-3) complex.

It localises to the cytoplasm. In terms of biological role, component of the eukaryotic translation initiation factor 3 (eIF-3) complex, which is involved in protein synthesis of a specialized repertoire of mRNAs and, together with other initiation factors, stimulates binding of mRNA and methionyl-tRNAi to the 40S ribosome. The eIF-3 complex specifically targets and initiates translation of a subset of mRNAs involved in cell proliferation. The chain is Eukaryotic translation initiation factor 3 subunit M from Schistosoma japonicum (Blood fluke).